Consider the following 408-residue polypeptide: Na(+)-translocating NADH-quinone reductase subunit F (408 aa).

A helical transmembrane segment spans residues 4-24 (IYLGVGMFIAIVLALVLIIMF). The 95-residue stretch at 33-127 (GEVTISINGD…DMDIELPEEI (95 aa)) folds into the 2Fe-2S ferredoxin-type domain. [2Fe-2S] cluster-binding residues include Cys70, Cys76, Cys79, and Cys111. The 141-residue stretch at 130-270 (IKKWDCEVIS…SGPFGEFFAK (141 aa)) folds into the FAD-binding FR-type domain.

This sequence belongs to the NqrF family. As to quaternary structure, composed of six subunits; NqrA, NqrB, NqrC, NqrD, NqrE and NqrF. It depends on [2Fe-2S] cluster as a cofactor. The cofactor is FAD.

Its subcellular location is the cell inner membrane. It carries out the reaction a ubiquinone + n Na(+)(in) + NADH + H(+) = a ubiquinol + n Na(+)(out) + NAD(+). In terms of biological role, NQR complex catalyzes the reduction of ubiquinone-1 to ubiquinol by two successive reactions, coupled with the transport of Na(+) ions from the cytoplasm to the periplasm. The first step is catalyzed by NqrF, which accepts electrons from NADH and reduces ubiquinone-1 to ubisemiquinone by a one-electron transfer pathway. In Pseudoalteromonas atlantica (strain T6c / ATCC BAA-1087), this protein is Na(+)-translocating NADH-quinone reductase subunit F.